Reading from the N-terminus, the 116-residue chain is Cysteine-rich venom protein Cau1 (116 aa).

An SCP domain is found at 4–42 (SYAVVGHYTQIVWYKSDRIGCAAAYCPSSVYNYFYVCQY). 5 disulfides stabilise this stretch: Cys-24-Cys-40, Cys-62-Cys-69, Cys-65-Cys-74, Cys-87-Cys-105, and Cys-96-Cys-109. The ShKT domain occupies 78–111 (CRVEDEFINCKDMAESRDCQDNYMMTNCAAFCSC).

It belongs to the CRISP family. In terms of tissue distribution, expressed by the venom gland.

The protein localises to the secreted. Functionally, blocks contraction of smooth muscle elicited by high potassium-induced depolarization, but does not block caffeine-stimulated contraction. May target voltage-gated calcium channels on smooth muscle. The sequence is that of Cysteine-rich venom protein Cau1 from Causus rhombeatus (Rhombic night adder).